Reading from the N-terminus, the 964-residue chain is SKI family transcriptional corepressor 1 (964 aa).

Disordered stretches follow at residues 45-72, 278-365, 414-452, 525-587, 610-766, and 793-842; these read TQLGPGREGSSSPNSKQELQPYSGSSAL, RTFS…GGSA, AGEPKGGPGTGSGGGAGTAAGAGGPGAGHLPPGAGPGPG, AGGG…RKSS, REAY…GPAA, and YLCT…EDGL. The segment covering 283 to 310 has biased composition (gly residues); it reads QGGGGGGANSGSGGAGKGGAGGGGGPGC. The segment covering 345–355 has biased composition (low complexity); sequence ALGLAAAANGP. 2 stretches are compositionally biased toward gly residues: residues 356 to 365 and 417 to 440; these read AGPGGPGGSA and PKGGPGTGSGGGAGTAAGAGGPGA. Residues 571 to 583 are compositionally biased toward pro residues; sequence SLAPLAPPPPPPA. The segment covering 652 to 661 has biased composition (acidic residues); the sequence is DTADEPEVDV. The segment covering 798 to 808 has biased composition (basic and acidic residues); sequence ETHEPDKEDNH. Residues 823–834 show a composition bias toward polar residues; the sequence is DQRSVSQPSPAN. A coiled-coil region spans residues 857–921; the sequence is ENLAREELQK…DTLCNELDQE (65 aa).

Belongs to the SKI family. Interacts with LBX1. Interacts with SMAD1, SMAD2 and SMAD3.

It localises to the nucleus. Functionally, inhibits BMP signaling. Acts as a transcriptional corepressor of LBX1. This Rattus norvegicus (Rat) protein is SKI family transcriptional corepressor 1 (Skor1).